Here is an 879-residue protein sequence, read N- to C-terminus: Beta-mannosidase (879 aa).

The first 17 residues, 1 to 17 (MLLRLLLLLAPCGAGFA), serve as a signal peptide directing secretion. Asparagine 35 and asparagine 77 each carry an N-linked (GlcNAc...) asparagine glycan. A disulfide bridge links cysteine 167 with cysteine 176. 190–192 (WDW) contacts substrate. The N-linked (GlcNAc...) asparagine glycan is linked to asparagine 297. Residue asparagine 456 participates in substrate binding. Glutamate 457 functions as the Proton donor in the catalytic mechanism. Disulfide bonds link cysteine 540–cysteine 629, cysteine 732–cysteine 761, and cysteine 764–cysteine 769. Glutamate 554 (nucleophile) is an active-site residue. N-linked (GlcNAc...) asparagine glycosylation occurs at asparagine 803.

The protein belongs to the glycosyl hydrolase 2 family. As to quaternary structure, monomer. In terms of processing, N-glycosylated. As to expression, detected in kidney (at protein level). Found in spleen and to a lesser extent in liver. Not detected in kidney or brain.

It localises to the lysosome. It carries out the reaction Hydrolysis of terminal, non-reducing beta-D-mannose residues in beta-D-mannosides.. It participates in glycan metabolism; N-glycan degradation. Functionally, exoglycosidase that cleaves the single beta-linked mannose residue from the non-reducing end of all N-linked glycoprotein oligosaccharides. The polypeptide is Beta-mannosidase (MANBA) (Capra hircus (Goat)).